The primary structure comprises 511 residues: Centrosomal protein CCDC61 (511 aa).

Position 1 is an N-acetylmethionine (methionine 1). The interval 1-143 (MDQPAGLQVD…PLPLPYQGKP (143 aa)) is head domain. Coiled-coil stretches lie at residues 176–203 (IWHL…SREE) and 246–273 (SRRL…LNSE). Threonine 283 is modified (phosphothreonine). 2 disordered regions span residues 284–413 (LPPV…DSFR) and 429–476 (SHSV…GGWV). Positions 290–302 (REGRASSSRERST) are enriched in basic and acidic residues. Phosphoserine is present on residues serine 330 and serine 332. Positions 360–369 (KQQQQQRNRM) are enriched in low complexity. Phosphoserine is present on residues serine 371 and serine 374. Positions 433–442 (SRSRRCRGRG) are enriched in basic residues. Phosphoserine is present on serine 446. Polar residues predominate over residues 449-458 (PWSRSKTKST). The residue at position 472 (serine 472) is a Phosphoserine.

This sequence belongs to the CCDC61 family. As to quaternary structure, forms homodimers (via head domain). Interacts with CEP170. Interacts with PCM1 and CEP131. Binds tubulin.

It localises to the cytoplasm. Its subcellular location is the cytoskeleton. The protein resides in the microtubule organizing center. It is found in the centrosome. The protein localises to the centriolar satellite. It localises to the cilium basal body. Microtubule-binding centrosomal protein required for centriole cohesion, independently of the centrosome-associated protein/CEP250 and rootletin/CROCC linker. In interphase, required for anchoring microtubule at the mother centriole subdistal appendages and for centrosome positioning. During mitosis, may be involved in spindle assembly and chromatin alignment by regulating the organization of spindle microtubules into a symmetrical structure. Plays a non-essential role in ciliogenesis. This chain is Centrosomal protein CCDC61, found in Mus musculus (Mouse).